A 26-amino-acid chain; its full sequence is AMP deaminase 1 (26 aa).

This sequence belongs to the metallo-dependent hydrolases superfamily. Adenosine and AMP deaminases family. In terms of assembly, homotetramer.

The enzyme catalyses AMP + H2O + H(+) = IMP + NH4(+). Its pathway is purine metabolism; IMP biosynthesis via salvage pathway; IMP from AMP: step 1/1. Its function is as follows. AMP deaminase plays a critical role in energy metabolism. The sequence is that of AMP deaminase 1 (AMPD1) from Gallus gallus (Chicken).